Here is a 272-residue protein sequence, read N- to C-terminus: 3-methyl-2-oxobutanoate hydroxymethyltransferase (272 aa).

The Mg(2+) site is built by Asp-53 and Asp-92. Residues 53 to 54 (DS), Asp-92, and Lys-120 contribute to the 3-methyl-2-oxobutanoate site. Residue Glu-122 participates in Mg(2+) binding. Glu-189 functions as the Proton acceptor in the catalytic mechanism.

Belongs to the PanB family. Homodecamer; pentamer of dimers. It depends on Mg(2+) as a cofactor.

Its subcellular location is the cytoplasm. The enzyme catalyses 3-methyl-2-oxobutanoate + (6R)-5,10-methylene-5,6,7,8-tetrahydrofolate + H2O = 2-dehydropantoate + (6S)-5,6,7,8-tetrahydrofolate. The protein operates within cofactor biosynthesis; (R)-pantothenate biosynthesis; (R)-pantoate from 3-methyl-2-oxobutanoate: step 1/2. In terms of biological role, catalyzes the reversible reaction in which hydroxymethyl group from 5,10-methylenetetrahydrofolate is transferred onto alpha-ketoisovalerate to form ketopantoate. The polypeptide is 3-methyl-2-oxobutanoate hydroxymethyltransferase (Ralstonia pickettii (strain 12J)).